The following is a 391-amino-acid chain: Ferrochelatase (391 aa).

Positions 196 and 281 each coordinate Fe cation.

This sequence belongs to the ferrochelatase family.

Its subcellular location is the cytoplasm. It carries out the reaction heme b + 2 H(+) = protoporphyrin IX + Fe(2+). The protein operates within porphyrin-containing compound metabolism; protoheme biosynthesis; protoheme from protoporphyrin-IX: step 1/1. Its function is as follows. Catalyzes the ferrous insertion into protoporphyrin IX. This is Ferrochelatase from Prochlorococcus marinus (strain MIT 9211).